The chain runs to 418 residues: Acyltransferase calJ (418 aa).

The Acyl-ester intermediate role is filled by S79. Substrate contacts are provided by R176 and Y191.

Belongs to the class-A beta-lactamase family.

It functions in the pathway secondary metabolite biosynthesis. Its function is as follows. Acyltransferase; part of the gene cluster that mediates the biosynthesis of calbistrin A and related compounds. Calbistrin A is a secondary metabolite with an interesting structure that was recently found to have bioactivity against leukemia cells. It consists of two polyketides linked by an ester bond: a bicyclic decalin containing polyketide and a linear 12 carbon dioic acid structure. The polyketide synthase calA is probably responsible for forming the decalin moiety. Because calA lacks a designated enoylreductase (ER) domain, the required activity is provided by the trans-enoyl reductase calK. Following release from the PKS, calF then probably catalyzes the oxidation and the subsequent Diels Alder cycloisomerization that lead to the formation of the decalin moiety. The decalin polyketide backbone includes two C-methyl groups, at C7 and C11 in backbone, of which the C7 position is probably methylated by the methyltransferase domain of calA. A candidate for adding the methyl group at C11, if not done by CalA, is the cluster methyltransferase calH. Several additional tailoring enzymes within the cluster could be involved in the modification of the decalin polyketide product. Those include the 3 cytochrome P450 monooxygenases CalE, CalG and CalL, of which one might be responsible for the introduction of the extra hydroxyl group attached to the backbone of the decalin moiety, at position C9 in the backbone, that allows for attachment of the linear moiety. One tailoring enzyme activity that is expected to be involved in biosynthesis of calbistrin is an acyltransferase for connecting the two polyketide synthase products, and which could be performed by the cluster acyltransferase calJ. The enzyme responsible for the biosynthesis of the linear moiety, probably a second PKS, has not been identified yet. This chain is Acyltransferase calJ, found in Penicillium decumbens.